Reading from the N-terminus, the 352-residue chain is Ketoisovalerate oxidoreductase subunit VorB (352 aa).

Heterotrimer of the VorA, VorB and VorC subunits.

The enzyme catalyses 3-methyl-2-oxobutanoate + 2 oxidized [2Fe-2S]-[ferredoxin] + CoA = 2-methylpropanoyl-CoA + 2 reduced [2Fe-2S]-[ferredoxin] + CO2 + H(+). This Methanothermobacter marburgensis (strain ATCC BAA-927 / DSM 2133 / JCM 14651 / NBRC 100331 / OCM 82 / Marburg) (Methanobacterium thermoautotrophicum) protein is Ketoisovalerate oxidoreductase subunit VorB (vorB).